The following is a 420-amino-acid chain: ATP-dependent Clp protease ATP-binding subunit ClpX (420 aa).

One can recognise a ClpX-type ZB domain in the interval 3-57 (KKTPGTNGKQKLFCSFCGKEQDAVKRLVAGPGVYICDECISLCNEIIAEDHEHSH). Positions 16, 19, 38, and 41 each coordinate Zn(2+). 122–129 (PTGSGKTL) lines the ATP pocket.

It belongs to the ClpX chaperone family. As to quaternary structure, component of the ClpX-ClpP complex. Forms a hexameric ring that, in the presence of ATP, binds to fourteen ClpP subunits assembled into a disk-like structure with a central cavity, resembling the structure of eukaryotic proteasomes.

In terms of biological role, ATP-dependent specificity component of the Clp protease. It directs the protease to specific substrates. Can perform chaperone functions in the absence of ClpP. The chain is ATP-dependent Clp protease ATP-binding subunit ClpX from Leptospira borgpetersenii serovar Hardjo-bovis (strain L550).